The following is a 261-amino-acid chain: UPF0246 protein azo1887 (261 aa).

Belongs to the UPF0246 family.

This chain is UPF0246 protein azo1887, found in Azoarcus sp. (strain BH72).